The chain runs to 343 residues: Sulfate/thiosulfate import ATP-binding protein CysA (343 aa).

Residues 3 to 233 (ILIENISKTF…PATPFVMGFM (231 aa)) enclose the ABC transporter domain. 35-42 (GPSGSGKS) contacts ATP.

Belongs to the ABC transporter superfamily. Sulfate/tungstate importer (TC 3.A.1.6) family.

It localises to the plastid. It is found in the chloroplast. The catalysed reaction is sulfate(out) + ATP + H2O = sulfate(in) + ADP + phosphate + H(+). It carries out the reaction thiosulfate(out) + ATP + H2O = thiosulfate(in) + ADP + phosphate + H(+). Its function is as follows. Part of the ABC transporter complex involved in sulfate/thiosulfate import. Responsible for energy coupling to the transport system. The protein is Sulfate/thiosulfate import ATP-binding protein CysA of Nephroselmis olivacea (Green alga).